The primary structure comprises 167 residues: DNA-directed RNA polymerase 19 kDa subunit (167 aa).

The tract at residues 15–41 (DNDYKSYDEDDDSISDIGETSDDCCTT) is disordered. Positions 22-36 (DEDDDSISDIGETSD) are enriched in acidic residues.

The protein belongs to the poxviridae DNA-directed RNA polymerase 19 kDa subunit family. In terms of assembly, the DNA-dependent RNA polymerase used for intermediate and late genes expression consists of eight subunits (147) kDa, 133 kDa, 35 kDa, 30 kDa, 22 kDa, 19 kDa, 18 kDa and 7 kDa totalling more than 500 kDa in mass. The same holoenzyme, with the addition of the transcription-specificity factor RAP94, is used for early gene expression.

It localises to the virion. It catalyses the reaction RNA(n) + a ribonucleoside 5'-triphosphate = RNA(n+1) + diphosphate. Functionally, part of the DNA-dependent RNA polymerase which catalyzes the transcription of viral DNA into RNA using the four ribonucleoside triphosphates as substrates. Responsible for the transcription of early, intermediate and late genes. DNA-dependent RNA polymerase associates with the early transcription factor (ETF) thereby allowing the early genes transcription. Late transcription, and probably also intermediate transcription, require newly synthesized RNA polymerase. The sequence is that of DNA-directed RNA polymerase 19 kDa subunit (RPO19) from Vertebrata (FPV).